The chain runs to 462 residues: Myrosinase-binding protein 1 (462 aa).

The interval 1–23 is disordered; that stretch reads MSTGGPQKLEAQGGKEGKEWDDG. 3 consecutive Jacalin-type lectin domains span residues 6–148, 157–300, and 310–453; these read PQKL…YFAP, PNKV…YFAP, and TKKL…HIVP. Basic and acidic residues predominate over residues 13–23; that stretch reads GGKEGKEWDDG.

The protein belongs to the jacalin lectin family. In terms of tissue distribution, expressed exclusively in flowers, in male and female organs, petals and pedicels. Not detected in pollen grains or sepals.

The chain is Myrosinase-binding protein 1 (MBP1) from Arabidopsis thaliana (Mouse-ear cress).